The chain runs to 447 residues: Cysteine--tRNA ligase (447 aa).

C28 serves as a coordination point for Zn(2+). The 'HIGH' region motif lies at 30–40 (PTVYNYIHIGN). Zn(2+) contacts are provided by C211, H236, and E240. Positions 268-272 (KMSKS) match the 'KMSKS' region motif. Position 271 (K271) interacts with ATP.

This sequence belongs to the class-I aminoacyl-tRNA synthetase family. As to quaternary structure, monomer. It depends on Zn(2+) as a cofactor.

The protein localises to the cytoplasm. It catalyses the reaction tRNA(Cys) + L-cysteine + ATP = L-cysteinyl-tRNA(Cys) + AMP + diphosphate. This chain is Cysteine--tRNA ligase, found in Streptococcus thermophilus (strain CNRZ 1066).